A 304-amino-acid polypeptide reads, in one-letter code: Putative S-adenosyl-L-methionine-dependent methyltransferase MSMEG_1481/MSMEI_1445 (304 aa).

S-adenosyl-L-methionine contacts are provided by residues Asp-127 and Asp-156 to Leu-157.

It belongs to the UPF0677 family.

Exhibits S-adenosyl-L-methionine-dependent methyltransferase activity. The polypeptide is Putative S-adenosyl-L-methionine-dependent methyltransferase MSMEG_1481/MSMEI_1445 (Mycolicibacterium smegmatis (strain ATCC 700084 / mc(2)155) (Mycobacterium smegmatis)).